We begin with the raw amino-acid sequence, 506 residues long: Histidine ammonia-lyase (506 aa).

The segment at residues 143-145 is a cross-link (5-imidazolinone (Ala-Gly)); that stretch reads ASG. Ser-144 is subject to 2,3-didehydroalanine (Ser).

It belongs to the PAL/histidase family. Contains an active site 4-methylidene-imidazol-5-one (MIO), which is formed autocatalytically by cyclization and dehydration of residues Ala-Ser-Gly.

The protein localises to the cytoplasm. It carries out the reaction L-histidine = trans-urocanate + NH4(+). Its pathway is amino-acid degradation; L-histidine degradation into L-glutamate; N-formimidoyl-L-glutamate from L-histidine: step 1/3. The protein is Histidine ammonia-lyase of Salmonella typhimurium (strain LT2 / SGSC1412 / ATCC 700720).